Consider the following 20-residue polypeptide: Punein (20 aa).

Residues tyrosine 1–proline 20 form the Barwin domain.

In terms of processing, the N-terminus is blocked.

This is Punein from Punica granatum (Pomegranate).